Here is a 288-residue protein sequence, read N- to C-terminus: Stage IV sporulation protein FB (288 aa).

The Mother cell cytoplasmic portion of the chain corresponds to 1–10; the sequence is MNKWLDLILK. A helical transmembrane segment spans residues 11-30; it reads IHVHPFLWIIAALGLLTGHM. A topological domain (forespore intermembrane space) is located at residue Lys31. A helical membrane pass occupies residues 32-56; the sequence is ALLCLLLIVLIHELGHAALAVFFSW. Residue His43 coordinates Zn(2+). Glu44 is an active-site residue. His47 is a Zn(2+) binding site. The Mother cell cytoplasmic segment spans residues 57 to 83; the sequence is RIKRVFLLPFGGTVEVEEHGNRPLKEE. A helical transmembrane segment spans residues 84-105; sequence FAVIIAGPLQHIWLQFAAWMLA. Residues 106–126 are Forespore intermembrane space-facing; it reads EVSVIHQHTFELFTFYNLSIL. Residues 127–146 traverse the membrane as a helical segment; that stretch reads FVNLLPIWPLDGGKLLFLLF. Residue Asp137 coordinates Zn(2+). Residues 147-161 are Mother cell cytoplasmic-facing; it reads SKQLPFQKAHRLNLK. The helical transmembrane segment at 162-178 threads the bilayer; the sequence is TSLCFCLLLGCWVLFVI. A topological domain (forespore intermembrane space) is located at residue Pro179. A helical transmembrane segment spans residues 180-199; the sequence is LQISAWVLFVFLAVSLFEEY. Residues 200–288 lie on the Mother cell cytoplasmic side of the membrane; the sequence is RQRHYIHVRF…SSMEELLLPY (89 aa).

This sequence belongs to the peptidase M50B family. As to quaternary structure, forms a complex with SpoIVFA and BofA localized in the mother-cell membrane surrounding the forespore. Zn(2+) serves as cofactor.

It localises to the forespore outer membrane. Implicated in the coupling of mother cell to forespore gene expression. Required for spore formation. Processes the pro-sigma K factor. The polypeptide is Stage IV sporulation protein FB (spoIVFB) (Bacillus subtilis (strain 168)).